A 288-amino-acid chain; its full sequence is UDP-3-O-acyl-N-acetylglucosamine deacetylase (288 aa).

His-79, His-236, and Asp-240 together coordinate Zn(2+). His-263 functions as the Proton donor in the catalytic mechanism.

Belongs to the LpxC family. Zn(2+) is required as a cofactor.

The enzyme catalyses a UDP-3-O-[(3R)-3-hydroxyacyl]-N-acetyl-alpha-D-glucosamine + H2O = a UDP-3-O-[(3R)-3-hydroxyacyl]-alpha-D-glucosamine + acetate. The protein operates within glycolipid biosynthesis; lipid IV(A) biosynthesis; lipid IV(A) from (3R)-3-hydroxytetradecanoyl-[acyl-carrier-protein] and UDP-N-acetyl-alpha-D-glucosamine: step 2/6. Its function is as follows. Catalyzes the hydrolysis of UDP-3-O-myristoyl-N-acetylglucosamine to form UDP-3-O-myristoylglucosamine and acetate, the committed step in lipid A biosynthesis. In Rickettsia bellii (strain OSU 85-389), this protein is UDP-3-O-acyl-N-acetylglucosamine deacetylase.